A 349-amino-acid polypeptide reads, in one-letter code: Tetraacyldisaccharide 4'-kinase (349 aa).

58–65 (TAGGSGKT) serves as a coordination point for ATP.

It belongs to the LpxK family.

It carries out the reaction a lipid A disaccharide + ATP = a lipid IVA + ADP + H(+). Its pathway is glycolipid biosynthesis; lipid IV(A) biosynthesis; lipid IV(A) from (3R)-3-hydroxytetradecanoyl-[acyl-carrier-protein] and UDP-N-acetyl-alpha-D-glucosamine: step 6/6. Functionally, transfers the gamma-phosphate of ATP to the 4'-position of a tetraacyldisaccharide 1-phosphate intermediate (termed DS-1-P) to form tetraacyldisaccharide 1,4'-bis-phosphate (lipid IVA). The chain is Tetraacyldisaccharide 4'-kinase from Shewanella amazonensis (strain ATCC BAA-1098 / SB2B).